The following is a 751-amino-acid chain: MFGSPKRAALAAASLLAIFGNGPSVMAQETSSNNAVVADGKTFALNGENVSYRFRVNETTGDLVSDHFGGSITGDLFPGFGAEALGGWVGLAGRFRREFPDHGRGDFRIPAVRIRQEAGYTVTDLQYQSYSVIPGKPALPGLPSTFGSEEDVTTLVVHLYDNYSSIAVDLSYSIFPKYDAIVRSANVTNKGTQNITVEALSSFSFDFPYEDLEMISLRGDWAREAHRQRRKVEYGLQGFGSSTGFSSHLHNPFLAIVHPSTTESQGEAWGFNLVYTGSFSVDVEKGSQGLTRALLGFNPSQLSWQLGAGETLTSPECVSVYSSDGIGGMSRSFHRLYRNHLIKSKFATSDRPPLLNSWEGLYFDYNESTIYRLAEESAALGVKLFVMDDGWFGDKYPRVSDNAGLGDWVPNPDRFPDGLTPLVEDVTKLKAGNSSTDLRFGLWVEPEMANPNSTLYHEHPDWVLHAGQYPRTLQRNQLVLNLALPEVQDYIIDEITNILNSSAISYVKWDFNRAMHETPSPSNDHEYILGMYRVFDTLTTRFPDVLWEGCASGGGRFDPGVLEYFPQIWTSDNTDALMRITIQLGTSLAYPPSAMGAHLSAVPNAQTGRTIPVKFRGHVAMMGGSFGLELDPAELQEDEKAEVPGLIALAEKVNPIILTGDMWRLRLPEESNWPAVLFISEDGNQAVLFYFQLGPNVNHATPWLRLQGLDPKATYSVDGNGSYSGATLMNMGLQYKFESDYDSKVVFLQKQ.

A signal peptide spans 1-27; sequence MFGSPKRAALAAASLLAIFGNGPSVMA. N-linked (GlcNAc...) asparagine glycans are attached at residues Asn-49, Asn-57, Asn-162, Asn-186, Asn-194, Asn-366, Asn-433, Asn-452, and Asn-500. Asp-510 serves as the catalytic Nucleophile. Asp-572 serves as the catalytic Proton donor. Asn-720 is a glycosylation site (N-linked (GlcNAc...) asparagine).

This sequence belongs to the glycosyl hydrolase 36 family. Homotetramer. Requires Mg(2+) as cofactor. NAD(+) is required as a cofactor.

Its subcellular location is the secreted. It catalyses the reaction Hydrolysis of terminal, non-reducing alpha-D-galactose residues in alpha-D-galactosides, including galactose oligosaccharides, galactomannans and galactolipids.. In terms of biological role, hydrolyzes a variety of simple alpha-D-galactoside as well as more complex molecules such as oligosaccharides and polysaccharides. This chain is Probable alpha-galactosidase C (aglC), found in Aspergillus flavus (strain ATCC 200026 / FGSC A1120 / IAM 13836 / NRRL 3357 / JCM 12722 / SRRC 167).